An 830-amino-acid chain; its full sequence is Post-transcriptional regulator MKT1 (830 aa).

Lysine 4 participates in a covalent cross-link: Glycyl lysine isopeptide (Lys-Gly) (interchain with G-Cter in ubiquitin). An interaction with PBP1 region spans residues 130-380 (RSRGWTQWNN…SPATTVTKNA (251 aa)). Residues 347–400 (DSEKNNKDGKKSNLSSPSSASSSASPATTVTKNASEKLTYEKSSTKEVRKPRDI) form a disordered region. A phosphoserine mark is found at serine 358, serine 362, and serine 371. Residues 361–373 (SSPSSASSSASPA) show a composition bias toward low complexity. Positions 380–400 (ASEKLTYEKSSTKEVRKPRDI) are enriched in basic and acidic residues.

The protein belongs to the XPG/RAD2 endonuclease family. Interacts (via C-terminus) with PBP1 (via C-terminus).

The protein localises to the cytoplasm. It localises to the cytosol. In terms of biological role, involved in 3'-UTR mediated RNA regulation. Binds to RNA-binding and RNA regulatory proteins. Complexes with PAB1-binding protein to promote mRNA interactions with poly(A)-binding protein. Promotes mating-type switching in mother cells by positively regulating HO expression. This is Post-transcriptional regulator MKT1 (MKT1) from Saccharomyces cerevisiae (strain ATCC 204508 / S288c) (Baker's yeast).